Here is a 425-residue protein sequence, read N- to C-terminus: MADKEAAFDDAVEERVINEEYKIWKKNTPFLYDLVMTHALEWPSLTAQWLSDVTRPDGKDFSIHRLVLGTHTSDEQNHLVIASVQLPNDDAQFDASHYDSEKGEFGGFGSVSGKIEIEIKITHDGEVNRARYMPQNPCIIATKTPTSDVLVFDYTKHPSKPDPSGECNPNLRLRGHQKEGYGLSWNPNLSGNLLSASDDHTICLWDISAVPKEGKVVDAKTIFTGHTAVVEDVSWHLLHESLFGSVADDQKLMIWDTRSNNTSKPSHSVDAHTAEVNCLSFNPYSEFILATGSADKTVALWDLRNLKLKLHSFESHKDEIFQVQWSPHNETILASSGTDRRLNVWDLSKIGEEQSPEDAEDGPPELLFIHGGHTAKISDFSWNPNEPWVICSVSEDNIMQVWQMAENIYNDEDTEGGVDPEGQGS.

Position 2 is an N-acetylalanine (alanine 2). WD repeat units lie at residues 32–125 (YDLV…THDG), 126–175 (EVNR…RLRG), 176–223 (HQKE…KTIF), 225–270 (GHTA…HSVD), 271–314 (AHTA…HSFE), 315–371 (SHKD…FIHG), and 372–404 (GHTA…VWQM).

The protein belongs to the WD repeat RBAP46/RBAP48/MSI1 family. As to quaternary structure, binds directly to histone H4, probably via helix 1 of the histone fold, a region that is not accessible when histone H4 is in chromatin. Probably forms a large corepressor complex that contains ncor1, sin3a, hdac1-A and/or hdac1-B, hdac2, rbbp4-A and/or rbbp4-B and possibly rbbp7.

Its subcellular location is the nucleus. It is found in the chromosome. The protein resides in the telomere. In terms of biological role, core histone-binding subunit that may target chromatin assembly factors, chromatin remodeling factors and histone deacetylases to their histone substrates in a manner that is regulated by nucleosomal DNA. Component of several complexes which regulate chromatin metabolism. The protein is Histone-binding protein RBBP4-A (rbbp4-a) of Xenopus laevis (African clawed frog).